We begin with the raw amino-acid sequence, 367 residues long: UDP-N-acetylglucosamine--N-acetylmuramyl-(pentapeptide) pyrophosphoryl-undecaprenol N-acetylglucosamine transferase (367 aa).

Residues 13 to 15, Asn-127, Arg-168, Ser-200, Ile-251, and Gln-296 contribute to the UDP-N-acetyl-alpha-D-glucosamine site; that span reads TGG.

Belongs to the glycosyltransferase 28 family. MurG subfamily.

The protein resides in the cell inner membrane. It carries out the reaction di-trans,octa-cis-undecaprenyl diphospho-N-acetyl-alpha-D-muramoyl-L-alanyl-D-glutamyl-meso-2,6-diaminopimeloyl-D-alanyl-D-alanine + UDP-N-acetyl-alpha-D-glucosamine = di-trans,octa-cis-undecaprenyl diphospho-[N-acetyl-alpha-D-glucosaminyl-(1-&gt;4)]-N-acetyl-alpha-D-muramoyl-L-alanyl-D-glutamyl-meso-2,6-diaminopimeloyl-D-alanyl-D-alanine + UDP + H(+). The protein operates within cell wall biogenesis; peptidoglycan biosynthesis. In terms of biological role, cell wall formation. Catalyzes the transfer of a GlcNAc subunit on undecaprenyl-pyrophosphoryl-MurNAc-pentapeptide (lipid intermediate I) to form undecaprenyl-pyrophosphoryl-MurNAc-(pentapeptide)GlcNAc (lipid intermediate II). This Flavobacterium psychrophilum (strain ATCC 49511 / DSM 21280 / CIP 103535 / JIP02/86) protein is UDP-N-acetylglucosamine--N-acetylmuramyl-(pentapeptide) pyrophosphoryl-undecaprenol N-acetylglucosamine transferase.